Here is a 193-residue protein sequence, read N- to C-terminus: Ion-translocating oxidoreductase complex subunit A (193 aa).

6 helical membrane passes run 5-25 (LLLLVGTVLVNNFVLVQFLGL), 39-59 (IGMSFATVFVMTLASLLSYLV), 72-92 (LTTMSFILVIAVVVQFTEMVV), 102-122 (LLGIFLPLITTNCAVLGVALL), 134-154 (IIYGFGAALGFSLVLIMFSAM), and 171-191 (AIAMITAGLMSLAFLGFTGLV).

This sequence belongs to the NqrDE/RnfAE family. In terms of assembly, the complex is composed of six subunits: RnfA, RnfB, RnfC, RnfD, RnfE and RnfG.

It is found in the cell inner membrane. Part of a membrane-bound complex that couples electron transfer with translocation of ions across the membrane. The polypeptide is Ion-translocating oxidoreductase complex subunit A (Colwellia psychrerythraea (strain 34H / ATCC BAA-681) (Vibrio psychroerythus)).